Consider the following 499-residue polypeptide: Kynurenine 3-monooxygenase 3 (499 aa).

Belongs to the aromatic-ring hydroxylase family. KMO subfamily. Requires FAD as cofactor.

It localises to the mitochondrion outer membrane. The enzyme catalyses L-kynurenine + NADPH + O2 + H(+) = 3-hydroxy-L-kynurenine + NADP(+) + H2O. It participates in cofactor biosynthesis; NAD(+) biosynthesis; quinolinate from L-kynurenine: step 1/3. Functionally, catalyzes the hydroxylation of L-kynurenine (L-Kyn) to form 3-hydroxy-L-kynurenine (L-3OHKyn). Required for synthesis of quinolinic acid. This chain is Kynurenine 3-monooxygenase 3 (bna4-3), found in Aspergillus niger (strain ATCC MYA-4892 / CBS 513.88 / FGSC A1513).